A 417-amino-acid polypeptide reads, in one-letter code: Lipoyl synthase, mitochondrial (417 aa).

The transit peptide at 1–30 (MATSIPRSRCFLTSSTLKVVPRSRTPLRSF) directs the protein to the mitochondrion. A disordered region spans residues 23-62 (SRTPLRSFATTSDTPQTSVPEAPGKRSRPPTSFSDTLNAG). Composition is skewed to polar residues over residues 30–41 (FATTSDTPQTSV) and 51–61 (PPTSFSDTLNA). [4Fe-4S] cluster-binding residues include Cys-132, Cys-137, Cys-143, Cys-163, Cys-167, Cys-170, and Ser-378. Residues 146–367 (GSSKSAATAT…RQRALDMGFL (222 aa)) enclose the Radical SAM core domain.

This sequence belongs to the radical SAM superfamily. Lipoyl synthase family. [4Fe-4S] cluster is required as a cofactor.

It is found in the mitochondrion. It catalyses the reaction [[Fe-S] cluster scaffold protein carrying a second [4Fe-4S](2+) cluster] + N(6)-octanoyl-L-lysyl-[protein] + 2 oxidized [2Fe-2S]-[ferredoxin] + 2 S-adenosyl-L-methionine + 4 H(+) = [[Fe-S] cluster scaffold protein] + N(6)-[(R)-dihydrolipoyl]-L-lysyl-[protein] + 4 Fe(3+) + 2 hydrogen sulfide + 2 5'-deoxyadenosine + 2 L-methionine + 2 reduced [2Fe-2S]-[ferredoxin]. It participates in protein modification; protein lipoylation via endogenous pathway; protein N(6)-(lipoyl)lysine from octanoyl-[acyl-carrier-protein]: step 2/2. Functionally, catalyzes the radical-mediated insertion of two sulfur atoms into the C-6 and C-8 positions of the octanoyl moiety bound to the lipoyl domains of lipoate-dependent enzymes, thereby converting the octanoylated domains into lipoylated derivatives. The chain is Lipoyl synthase, mitochondrial from Pyrenophora tritici-repentis (strain Pt-1C-BFP) (Wheat tan spot fungus).